The following is a 438-amino-acid chain: Trigger factor (438 aa).

The PPIase FKBP-type domain maps to 163–248 (GDIITIDYEG…VKEIKRKELA (86 aa)).

This sequence belongs to the FKBP-type PPIase family. Tig subfamily.

The protein resides in the cytoplasm. The catalysed reaction is [protein]-peptidylproline (omega=180) = [protein]-peptidylproline (omega=0). Its function is as follows. Involved in protein export. Acts as a chaperone by maintaining the newly synthesized protein in an open conformation. Functions as a peptidyl-prolyl cis-trans isomerase. The chain is Trigger factor from Desulforudis audaxviator (strain MP104C).